The chain runs to 501 residues: Probable cytosol aminopeptidase (501 aa).

Mn(2+) is bound by residues K267 and D272. K279 is a catalytic residue. Mn(2+)-binding residues include D290, D349, and E351. R353 is a catalytic residue.

Belongs to the peptidase M17 family. The cofactor is Mn(2+).

The protein localises to the cytoplasm. The catalysed reaction is Release of an N-terminal amino acid, Xaa-|-Yaa-, in which Xaa is preferably Leu, but may be other amino acids including Pro although not Arg or Lys, and Yaa may be Pro. Amino acid amides and methyl esters are also readily hydrolyzed, but rates on arylamides are exceedingly low.. The enzyme catalyses Release of an N-terminal amino acid, preferentially leucine, but not glutamic or aspartic acids.. In terms of biological role, presumably involved in the processing and regular turnover of intracellular proteins. Catalyzes the removal of unsubstituted N-terminal amino acids from various peptides. This is Probable cytosol aminopeptidase from Hamiltonella defensa subsp. Acyrthosiphon pisum (strain 5AT).